Here is a 186-residue protein sequence, read N- to C-terminus: Protein C (186 aa).

Positions 1 to 15 (MSKTDWNASGLSRPS) are enriched in polar residues. The disordered stretch occupies residues 1–44 (MSKTDWNASGLSRPSPSAHWPSRKLWQHGQKYQTTQDRSEPPAG).

The protein belongs to the morbillivirus protein C family. As to quaternary structure, interacts with the phosphoprotein (via C-terminus); this interaction allows C to associate with the ribonucleocapsid.

The protein localises to the host nucleus. It localises to the host cytoplasmic vesicle. Its function is as follows. Ribonucleocapsid-associated protein that interacts with the phosphoprotein (P), thereby increasing replication accuracy and processivity of the polymerase complex. The sequence is that of Protein C (P/V/C) from Homo sapiens (Human).